The primary structure comprises 230 residues: Cytochrome c oxidase subunit 2 (230 aa).

Over Met-1–Ser-14 the chain is Mitochondrial intermembrane. A helical transmembrane segment spans residues Pro-15 to Thr-45. The Mitochondrial matrix segment spans residues Val-46 to Gln-59. The chain crosses the membrane as a helical span at residues Glu-60–Met-87. Residues Asp-88–Ala-230 lie on the Mitochondrial intermembrane side of the membrane. Cu cation is bound by residues His-161, Cys-196, Glu-198, Cys-200, His-204, and Met-207. Glu-198 contacts Mg(2+).

The protein belongs to the cytochrome c oxidase subunit 2 family. In terms of assembly, component of the cytochrome c oxidase (complex IV, CIV), a multisubunit enzyme composed of 14 subunits. The complex is composed of a catalytic core of 3 subunits MT-CO1, MT-CO2 and MT-CO3, encoded in the mitochondrial DNA, and 11 supernumerary subunits COX4I, COX5A, COX5B, COX6A, COX6B, COX6C, COX7A, COX7B, COX7C, COX8 and NDUFA4, which are encoded in the nuclear genome. The complex exists as a monomer or a dimer and forms supercomplexes (SCs) in the inner mitochondrial membrane with NADH-ubiquinone oxidoreductase (complex I, CI) and ubiquinol-cytochrome c oxidoreductase (cytochrome b-c1 complex, complex III, CIII), resulting in different assemblies (supercomplex SCI(1)III(2)IV(1) and megacomplex MCI(2)III(2)IV(2)). Found in a complex with TMEM177, COA6, COX18, COX20, SCO1 and SCO2. Interacts with TMEM177 in a COX20-dependent manner. Interacts with COX20. Interacts with COX16. Cu cation is required as a cofactor.

It localises to the mitochondrion inner membrane. The enzyme catalyses 4 Fe(II)-[cytochrome c] + O2 + 8 H(+)(in) = 4 Fe(III)-[cytochrome c] + 2 H2O + 4 H(+)(out). Its function is as follows. Component of the cytochrome c oxidase, the last enzyme in the mitochondrial electron transport chain which drives oxidative phosphorylation. The respiratory chain contains 3 multisubunit complexes succinate dehydrogenase (complex II, CII), ubiquinol-cytochrome c oxidoreductase (cytochrome b-c1 complex, complex III, CIII) and cytochrome c oxidase (complex IV, CIV), that cooperate to transfer electrons derived from NADH and succinate to molecular oxygen, creating an electrochemical gradient over the inner membrane that drives transmembrane transport and the ATP synthase. Cytochrome c oxidase is the component of the respiratory chain that catalyzes the reduction of oxygen to water. Electrons originating from reduced cytochrome c in the intermembrane space (IMS) are transferred via the dinuclear copper A center (CU(A)) of subunit 2 and heme A of subunit 1 to the active site in subunit 1, a binuclear center (BNC) formed by heme A3 and copper B (CU(B)). The BNC reduces molecular oxygen to 2 water molecules using 4 electrons from cytochrome c in the IMS and 4 protons from the mitochondrial matrix. The polypeptide is Cytochrome c oxidase subunit 2 (mt-co2) (Formosania lacustris (Oriental stream loach)).